The primary structure comprises 145 residues: D-aminoacyl-tRNA deacylase (145 aa).

The short motif at 137-138 is the Gly-cisPro motif, important for rejection of L-amino acids element; it reads GP.

The protein belongs to the DTD family. As to quaternary structure, homodimer.

Its subcellular location is the cytoplasm. The catalysed reaction is glycyl-tRNA(Ala) + H2O = tRNA(Ala) + glycine + H(+). It catalyses the reaction a D-aminoacyl-tRNA + H2O = a tRNA + a D-alpha-amino acid + H(+). Its function is as follows. An aminoacyl-tRNA editing enzyme that deacylates mischarged D-aminoacyl-tRNAs. Also deacylates mischarged glycyl-tRNA(Ala), protecting cells against glycine mischarging by AlaRS. Acts via tRNA-based rather than protein-based catalysis; rejects L-amino acids rather than detecting D-amino acids in the active site. By recycling D-aminoacyl-tRNA to D-amino acids and free tRNA molecules, this enzyme counteracts the toxicity associated with the formation of D-aminoacyl-tRNA entities in vivo and helps enforce protein L-homochirality. This Exiguobacterium sibiricum (strain DSM 17290 / CCUG 55495 / CIP 109462 / JCM 13490 / 255-15) protein is D-aminoacyl-tRNA deacylase.